A 214-amino-acid polypeptide reads, in one-letter code: Superoxide dismutase [Mn] (214 aa).

4 residues coordinate Mn(2+): His27, His82, Asp169, and His173.

This sequence belongs to the iron/manganese superoxide dismutase family. As to quaternary structure, homodimer. Mn(2+) is required as a cofactor.

It carries out the reaction 2 superoxide + 2 H(+) = H2O2 + O2. In terms of biological role, destroys superoxide anion radicals which are normally produced within the cells and which are toxic to biological systems. This is Superoxide dismutase [Mn] (sodA) from Pasteurella multocida (strain Pm70).